The sequence spans 938 residues: Isoleucine--tRNA ligase (938 aa).

The 'HIGH' region signature appears at 58 to 68 (PYANGSIHIGH). At lysine 183 the chain carries N6-acetyllysine. Residue glutamate 561 coordinates L-isoleucyl-5'-AMP. The 'KMSKS' region signature appears at 602–606 (KMSKS). Position 605 (lysine 605) interacts with ATP. Cysteine 901, cysteine 904, cysteine 921, and cysteine 924 together coordinate Zn(2+).

This sequence belongs to the class-I aminoacyl-tRNA synthetase family. IleS type 1 subfamily. As to quaternary structure, monomer. Zn(2+) serves as cofactor.

It localises to the cytoplasm. It catalyses the reaction tRNA(Ile) + L-isoleucine + ATP = L-isoleucyl-tRNA(Ile) + AMP + diphosphate. In terms of biological role, catalyzes the attachment of isoleucine to tRNA(Ile). As IleRS can inadvertently accommodate and process structurally similar amino acids such as valine, to avoid such errors it has two additional distinct tRNA(Ile)-dependent editing activities. One activity is designated as 'pretransfer' editing and involves the hydrolysis of activated Val-AMP. The other activity is designated 'posttransfer' editing and involves deacylation of mischarged Val-tRNA(Ile). This Escherichia coli O127:H6 (strain E2348/69 / EPEC) protein is Isoleucine--tRNA ligase.